We begin with the raw amino-acid sequence, 468 residues long: 3-isopropylmalate dehydratase large subunit (468 aa).

[4Fe-4S] cluster is bound by residues Cys-347, Cys-407, and Cys-410.

The protein belongs to the aconitase/IPM isomerase family. LeuC type 1 subfamily. As to quaternary structure, heterodimer of LeuC and LeuD. It depends on [4Fe-4S] cluster as a cofactor.

It catalyses the reaction (2R,3S)-3-isopropylmalate = (2S)-2-isopropylmalate. The protein operates within amino-acid biosynthesis; L-leucine biosynthesis; L-leucine from 3-methyl-2-oxobutanoate: step 2/4. Its function is as follows. Catalyzes the isomerization between 2-isopropylmalate and 3-isopropylmalate, via the formation of 2-isopropylmaleate. The protein is 3-isopropylmalate dehydratase large subunit of Campylobacter jejuni (strain RM1221).